Reading from the N-terminus, the 606-residue chain is MTVLGYPRSWSCHCLPVLILLLGIGHGPWVEGVTHYKPGDPVILYVNKVGPYHNPQETYHYYQLPVCCPEKIRHKSLSLGEVLDGDRMAESLYEIRFRENVEKRILCHMQLSSAQVEQLRQAIEELYYFEFVVDDLPIRGFVGYMEESGFLPHSHKIGLWTHLDFHLEFHGDRIIFANVSVRDVKPHSLDGLRSDELLGLTHTYSVRWSETSVEHRSDRRRGDDGGFFPRTLEIHWLSIINSMVLVFLLVGFVAVILMRVLRNDLARYNLDEETSSGGSSDDFDQGDNGWKIIHTDVFRFPPYRGLLCAVLGVGAQFLALGTGIIVMALLGMFNVHRHGAINSAAILLYALTCCISGYVSSHFYRQIGGERWVWNIILTSSLFSVPFFLTWSVVNSVHWANGSTQALPATTILLLLTVWLLVGFPLTVIGGIFGKNNASPFDAPCRTKNIAREIPPQPWYKSTVIHMTVGGFLPFSAISVELYYIFATVWGREQYTLYGILFFVFAILLSVGACISIALTYFQLSGEDYRWWWRSVLSVGSTGLFIFLYSVFYYARRSNMSGAVQTVEFFGYSLLTGYVFFLMLGTISFFSSLKFIRYIYVNLKMD.

The N-terminal stretch at 1 to 27 (MTVLGYPRSWSCHCLPVLILLLGIGHG) is a signal peptide. Asn-178 carries N-linked (GlcNAc...) asparagine glycosylation. A run of 4 helical transmembrane segments spans residues 237–257 (LSIINSMVLVFLLVGFVAVIL), 310–330 (VLGVGAQFLALGTGIIVMALL), 339–359 (GAINSAAILLYALTCCISGYV), and 373–393 (VWNIILTSSLFSVPFFLTWSV). Residue Asn-401 is glycosylated (N-linked (GlcNAc...) asparagine). The next 4 helical transmembrane spans lie at 412 to 432 (ILLLLTVWLLVGFPLTVIGGI), 469 to 489 (VGGFLPFSAISVELYYIFATV), 499 to 519 (GILFFVFAILLSVGACISIAL), and 535 to 555 (SVLSVGSTGLFIFLYSVFYYA). Asn-559 carries N-linked (GlcNAc...) asparagine glycosylation. Residues 570–590 (FGYSLLTGYVFFLMLGTISFF) form a helical membrane-spanning segment.

Belongs to the nonaspanin (TM9SF) (TC 9.A.2) family.

It localises to the lysosome membrane. Its subcellular location is the cytoplasmic vesicle. The protein localises to the autophagosome membrane. Its function is as follows. Plays an essential role in autophagy. This Mus musculus (Mouse) protein is Transmembrane 9 superfamily member 1 (Tm9sf1).